We begin with the raw amino-acid sequence, 584 residues long: 2-isopropylmalate synthase (584 aa).

Residues 40-314 enclose the Pyruvate carboxyltransferase domain; the sequence is PRWCAVDLRD…DPQIDFSDIE (275 aa). Residues aspartate 49, histidine 253, histidine 255, and asparagine 289 each contribute to the Mg(2+) site. The regulatory domain stretch occupies residues 456 to 584; that stretch reads SRDGSGSTWG…VRDAQEAAQD (129 aa).

Belongs to the alpha-IPM synthase/homocitrate synthase family. LeuA type 2 subfamily. In terms of assembly, homodimer. It depends on Mg(2+) as a cofactor.

The protein localises to the cytoplasm. It catalyses the reaction 3-methyl-2-oxobutanoate + acetyl-CoA + H2O = (2S)-2-isopropylmalate + CoA + H(+). Its pathway is amino-acid biosynthesis; L-leucine biosynthesis; L-leucine from 3-methyl-2-oxobutanoate: step 1/4. Functionally, catalyzes the condensation of the acetyl group of acetyl-CoA with 3-methyl-2-oxobutanoate (2-ketoisovalerate) to form 3-carboxy-3-hydroxy-4-methylpentanoate (2-isopropylmalate). This is 2-isopropylmalate synthase from Kocuria rhizophila (strain ATCC 9341 / DSM 348 / NBRC 103217 / DC2201).